Here is a 201-residue protein sequence, read N- to C-terminus: Glutathione peroxidase 1 (201 aa).

Ser-32 bears the Phosphoserine mark. Sec-47 is an active-site residue. Residue Sec-47 is a non-standard amino acid, selenocysteine. Lys-86, Lys-112, and Lys-146 each carry N6-acetyllysine; alternate. An N6-succinyllysine; alternate mark is found at Lys-86, Lys-112, and Lys-146. Ser-195 and Ser-199 each carry phosphoserine.

It belongs to the glutathione peroxidase family. Homotetramer. Interacts with MIEN1. During periods of oxidative stress, Sec-47 may react with a superoxide radical, irreversibly lose hydroselenide and be converted to dehydroalanine.

Its subcellular location is the cytoplasm. It carries out the reaction 2 glutathione + H2O2 = glutathione disulfide + 2 H2O. It catalyses the reaction (12S)-hydroperoxy-(5Z,8Z,10E,14Z)-eicosatetraenoate + 2 glutathione = (12S)-hydroxy-(5Z,8Z,10E,14Z)-eicosatetraenoate + glutathione disulfide + H2O. In terms of biological role, protects the hemoglobin in erythrocytes from oxidative breakdown. In platelets, plays a crucial role of glutathione peroxidase in the arachidonic acid metabolism. The protein is Glutathione peroxidase 1 (GPX1) of Hylobates lar (Lar gibbon).